The chain runs to 366 residues: Aminomethyltransferase (366 aa).

This sequence belongs to the GcvT family. In terms of assembly, the glycine cleavage system is composed of four proteins: P, T, L and H.

It catalyses the reaction N(6)-[(R)-S(8)-aminomethyldihydrolipoyl]-L-lysyl-[protein] + (6S)-5,6,7,8-tetrahydrofolate = N(6)-[(R)-dihydrolipoyl]-L-lysyl-[protein] + (6R)-5,10-methylene-5,6,7,8-tetrahydrofolate + NH4(+). The glycine cleavage system catalyzes the degradation of glycine. This chain is Aminomethyltransferase, found in Bacillus cytotoxicus (strain DSM 22905 / CIP 110041 / 391-98 / NVH 391-98).